A 232-amino-acid chain; its full sequence is Octanoyltransferase (232 aa).

In terms of domain architecture, BPL/LPL catalytic spans 33–216; that stretch reads GRAQDTVILL…HLVRALSNGS (184 aa). Residues 71–78, 146–148, and 159–161 each bind substrate; these read RGGRITWH, AIG, and GFA. The active-site Acyl-thioester intermediate is cysteine 177.

Belongs to the LipB family.

It is found in the cytoplasm. The catalysed reaction is octanoyl-[ACP] + L-lysyl-[protein] = N(6)-octanoyl-L-lysyl-[protein] + holo-[ACP] + H(+). Its pathway is protein modification; protein lipoylation via endogenous pathway; protein N(6)-(lipoyl)lysine from octanoyl-[acyl-carrier-protein]: step 1/2. Functionally, catalyzes the transfer of endogenously produced octanoic acid from octanoyl-acyl-carrier-protein onto the lipoyl domains of lipoate-dependent enzymes. Lipoyl-ACP can also act as a substrate although octanoyl-ACP is likely to be the physiological substrate. The protein is Octanoyltransferase of Clavibacter sepedonicus (Clavibacter michiganensis subsp. sepedonicus).